Consider the following 81-residue polypeptide: Bacteriochlorophyll c-binding protein (81 aa).

Residue histidine 25 participates in a bacteriochlorophyll c binding.

It belongs to the BChl C/E-binding protein family.

It localises to the chlorosome. The protein resides in the chlorosome envelope. Its function is as follows. Component of the photosynthetic apparatus. The light harvesting B740 complex binds bacteriochlorophyll c. This is Bacteriochlorophyll c-binding protein (csmA) from Prosthecochloris aestuarii (strain DSM 271 / SK 413).